The sequence spans 227 residues: Peroxisomal membrane protein 11B (227 aa).

Over 1–85 the chain is Cytoplasmic; sequence MSLDTVDKLV…RNPGATPMIR (85 aa). Residues 86–106 traverse the membrane as a helical segment; that stretch reads FLAVLANSGEMVYFFFDHFLW. Over 107–201 the chain is Lumenal; it reads LSRIGSIDAK…IALAEIHPNP (95 aa). The chain crosses the membrane as a helical span at residues 202–222; sequence FCNHTITLGISGLVSAWAGWY. The Cytoplasmic portion of the chain corresponds to 223-227; it reads RNWPS.

The protein belongs to the peroxin-11 family. As to quaternary structure, homooligomer. Interacts with ARC5 and FIS1B on peroxisomes. In terms of tissue distribution, expressed in roots, leaves and developing siliques.

The protein localises to the peroxisome membrane. Involved in peroxisomal proliferation. Promotes peroxisomal duplication, aggregation or elongation without fission. The polypeptide is Peroxisomal membrane protein 11B (PEX11B) (Arabidopsis thaliana (Mouse-ear cress)).